We begin with the raw amino-acid sequence, 692 residues long: Ribonuclease R (692 aa).

Residues 204-525 (RKDLRDLLCF…IVHRLLFHPL (322 aa)) enclose the RNB domain. One can recognise an S1 motif domain in the interval 563–648 (KKFLDEQPAT…LTQAIEWTLI (86 aa)). A disordered region spans residues 651 to 692 (KERSSSKKKKAKAKSNATQVKKKSSSKKKKAVSKAKKNRGGK). Residues 670-692 (VKKKSSSKKKKAVSKAKKNRGGK) show a composition bias toward basic residues.

It belongs to the RNR ribonuclease family. RNase R subfamily.

The protein resides in the cytoplasm. The catalysed reaction is Exonucleolytic cleavage in the 3'- to 5'-direction to yield nucleoside 5'-phosphates.. Its function is as follows. 3'-5' exoribonuclease that releases 5'-nucleoside monophosphates and is involved in maturation of structured RNAs. In Chlamydia muridarum (strain MoPn / Nigg), this protein is Ribonuclease R.